Reading from the N-terminus, the 271-residue chain is DNA-directed RNA polymerase subunit Rpo3 (271 aa).

This sequence belongs to the archaeal Rpo3/eukaryotic RPB3 RNA polymerase subunit family. Part of the RNA polymerase complex.

The protein resides in the cytoplasm. The catalysed reaction is RNA(n) + a ribonucleoside 5'-triphosphate = RNA(n+1) + diphosphate. Its function is as follows. DNA-dependent RNA polymerase (RNAP) catalyzes the transcription of DNA into RNA using the four ribonucleoside triphosphates as substrates. The protein is DNA-directed RNA polymerase subunit Rpo3 of Picrophilus torridus (strain ATCC 700027 / DSM 9790 / JCM 10055 / NBRC 100828 / KAW 2/3).